We begin with the raw amino-acid sequence, 102 residues long: Small ribosomal subunit protein bS18c (102 aa).

Belongs to the bacterial ribosomal protein bS18 family. In terms of assembly, part of the 30S ribosomal subunit.

The protein resides in the plastid. It is found in the chloroplast. The chain is Small ribosomal subunit protein bS18c from Phaseolus vulgaris (Kidney bean).